Reading from the N-terminus, the 319-residue chain is Taste receptor type 2 member 30 (319 aa).

Residue Met1 is a topological domain, extracellular. Residues 2–22 (ITFLPIIFSILIVVIFVIGNF) traverse the membrane as a helical segment. Over 23–46 (ANGFIALVNSIEWVKRQKISFVDQ) the chain is Cytoplasmic. Residues 47-67 (ILTALAVSRVGLLWVLLLHWY) traverse the membrane as a helical segment. Residues 68 to 86 (ATQLNPAFYSVEVRITVYN) are Extracellular-facing. A helical membrane pass occupies residues 87–107 (VWAVTNHFSSWLATSLSMFYL). Topologically, residues 108–126 (LKIANFSNLIFLRIKRRVK) are cytoplasmic. A helical membrane pass occupies residues 127-147 (SVVLVILLGPLLFLVCHLFVI). The Extracellular segment spans residues 148 to 178 (NMDETIWTKEYEGNMTWKIKLRSAMYHSNMT). Residues Asn161 and Asn176 are each glycosylated (N-linked (GlcNAc...) asparagine). A helical membrane pass occupies residues 179–199 (LTMLANFVPLTLTLISFLLLI). The Cytoplasmic portion of the chain corresponds to 200-229 (CSLCKHLKKMQLHGKGSQDPSTKVHIKALQ). The chain crosses the membrane as a helical span at residues 230-250 (TVTSFLLLCAIYFLSMIISVC). At 251–259 (NLGRLEKQP) the chain is on the extracellular side. A helical transmembrane segment spans residues 260 to 280 (VFMFCQAIIFSYPSTHPFILI). Over 281 to 319 (LGNKKLKQIFLSVLWHVRYWVKDRSLRLHRFTRAALCKG) the chain is Cytoplasmic.

The protein belongs to the G-protein coupled receptor T2R family.

It is found in the membrane. Functionally, receptor that may play a role in the perception of bitterness and is gustducin-linked. May play a role in sensing the chemical composition of the gastrointestinal content. The activity of this receptor may stimulate alpha gustducin, mediate PLC-beta-2 activation and lead to the gating of TRPM5. This chain is Taste receptor type 2 member 30 (TAS2R30), found in Pan troglodytes (Chimpanzee).